The following is a 396-amino-acid chain: Ribosomal RNA large subunit methyltransferase I (396 aa).

Positions 2-79 (AVRIKLKPGR…REEEIDREFF (78 aa)) constitute a PUA domain.

Belongs to the methyltransferase superfamily. RlmI family.

The protein resides in the cytoplasm. It carries out the reaction cytidine(1962) in 23S rRNA + S-adenosyl-L-methionine = 5-methylcytidine(1962) in 23S rRNA + S-adenosyl-L-homocysteine + H(+). In terms of biological role, specifically methylates the cytosine at position 1962 (m5C1962) of 23S rRNA. In Shewanella sp. (strain ANA-3), this protein is Ribosomal RNA large subunit methyltransferase I.